We begin with the raw amino-acid sequence, 232 residues long: Large ribosomal subunit protein uL1 (232 aa).

It belongs to the universal ribosomal protein uL1 family. Part of the 50S ribosomal subunit.

In terms of biological role, binds directly to 23S rRNA. The L1 stalk is quite mobile in the ribosome, and is involved in E site tRNA release. Its function is as follows. Protein L1 is also a translational repressor protein, it controls the translation of the L11 operon by binding to its mRNA. The protein is Large ribosomal subunit protein uL1 of Dinoroseobacter shibae (strain DSM 16493 / NCIMB 14021 / DFL 12).